Here is a 275-residue protein sequence, read N- to C-terminus: Large ribosomal subunit protein uL2c (275 aa).

The segment at threonine 219–serine 267 is disordered. Basic residues predominate over residues leucine 255–lysine 264.

This sequence belongs to the universal ribosomal protein uL2 family. In terms of assembly, part of the 50S ribosomal subunit.

It is found in the plastid. Its subcellular location is the chloroplast. In Thalassiosira pseudonana (Marine diatom), this protein is Large ribosomal subunit protein uL2c (rpl2).